We begin with the raw amino-acid sequence, 300 residues long: Type II methyltransferase M.Cfr9I (300 aa).

The disordered stretch occupies residues 109–129; it reads RGYRAPDKKNPARAMAVRPDT.

The protein belongs to the N(4)/N(6)-methyltransferase family. N(4) subfamily.

It carries out the reaction a 2'-deoxycytidine in DNA + S-adenosyl-L-methionine = an N(4)-methyl-2'-deoxycytidine in DNA + S-adenosyl-L-homocysteine + H(+). Its function is as follows. A beta subtype methylase, recognizes the double-stranded sequence 5'-CCCGGG-3', methylates C-2 on both strands, and protects the DNA from cleavage by the Cfr9I endonuclease. This chain is Type II methyltransferase M.Cfr9I, found in Citrobacter freundii.